A 336-amino-acid polypeptide reads, in one-letter code: Formimidoylglutamase (336 aa).

Mn(2+) is bound by residues His129, Asp160, His162, Asp164, Asp257, and Asp259.

It belongs to the arginase family. Mn(2+) is required as a cofactor.

The enzyme catalyses N-formimidoyl-L-glutamate + H2O = formamide + L-glutamate. Its pathway is amino-acid degradation; L-histidine degradation into L-glutamate; L-glutamate from N-formimidoyl-L-glutamate (hydrolase route): step 1/1. Catalyzes the conversion of N-formimidoyl-L-glutamate to L-glutamate and formamide. The polypeptide is Formimidoylglutamase (Vibrio vulnificus (strain YJ016)).